We begin with the raw amino-acid sequence, 214 residues long: Endothelin-3 (214 aa).

Residues 1 to 16 form the signal peptide; the sequence is MEPGLWLLLGLTVTSA. A propeptide spanning residues 17-94 is cleaved from the precursor; sequence AGLVPCPQSG…DKGLPAHHRP (78 aa). A disordered region spans residues 24-91; it reads QSGDSGRASV…KQEDKGLPAH (68 aa). The span at 25 to 35 shows a compositional bias: polar residues; sequence SGDSGRASVSQ. 2 disulfides stabilise this stretch: Cys97/Cys111 and Cys99/Cys107. A propeptide spanning residues 118-214 is cleaved from the precursor; it reads INTPEQTVPY…MSRTDKAHRP (97 aa). The tract at residues 159–173 is endothelin-like; it reads CTCMGADDKACAHFC. The segment at 183-214 is disordered; sequence SGRAERPAAEEMRETGGPRQRLMSRTDKAHRP. Basic and acidic residues predominate over residues 185 to 198; the sequence is RAERPAAEEMRETG.

This sequence belongs to the endothelin/sarafotoxin family.

It localises to the secreted. In terms of biological role, endothelins are endothelium-derived vasoconstrictor peptides. This chain is Endothelin-3 (Edn3), found in Mus musculus (Mouse).